A 541-amino-acid polypeptide reads, in one-letter code: 2-succinyl-5-enolpyruvyl-6-hydroxy-3-cyclohexene-1-carboxylate synthase (541 aa).

Belongs to the TPP enzyme family. MenD subfamily. As to quaternary structure, homodimer. Requires Mg(2+) as cofactor. The cofactor is Mn(2+). Thiamine diphosphate is required as a cofactor.

The catalysed reaction is isochorismate + 2-oxoglutarate + H(+) = 5-enolpyruvoyl-6-hydroxy-2-succinyl-cyclohex-3-ene-1-carboxylate + CO2. Its pathway is quinol/quinone metabolism; 1,4-dihydroxy-2-naphthoate biosynthesis; 1,4-dihydroxy-2-naphthoate from chorismate: step 2/7. The protein operates within quinol/quinone metabolism; menaquinone biosynthesis. Functionally, catalyzes the thiamine diphosphate-dependent decarboxylation of 2-oxoglutarate and the subsequent addition of the resulting succinic semialdehyde-thiamine pyrophosphate anion to isochorismate to yield 2-succinyl-5-enolpyruvyl-6-hydroxy-3-cyclohexene-1-carboxylate (SEPHCHC). The protein is 2-succinyl-5-enolpyruvyl-6-hydroxy-3-cyclohexene-1-carboxylate synthase of Rhodococcus jostii (strain RHA1).